The sequence spans 77 residues: Probable Fe(2+)-trafficking protein (77 aa).

It belongs to the Fe(2+)-trafficking protein family. In terms of assembly, monomer.

Functionally, could be a mediator in iron transactions between iron acquisition and iron-requiring processes, such as synthesis and/or repair of Fe-S clusters in biosynthetic enzymes. The sequence is that of Probable Fe(2+)-trafficking protein from Buchnera aphidicola subsp. Acyrthosiphon pisum (strain APS) (Acyrthosiphon pisum symbiotic bacterium).